Consider the following 1217-residue polypeptide: ATP-dependent helicase/nuclease subunit A (1217 aa).

Residues 10–475 (VIWTDAQWQS…IDLSQNFRSR (466 aa)) enclose the UvrD-like helicase ATP-binding domain. Position 31–38 (31–38 (AAAGSGKT)) interacts with ATP. Residues 476-786 (KEVLSTTNYI…RMMTIHSSKG (311 aa)) form the UvrD-like helicase C-terminal domain.

The protein belongs to the helicase family. AddA subfamily. Heterodimer of AddA and AddB/RexB. Requires Mg(2+) as cofactor.

The enzyme catalyses Couples ATP hydrolysis with the unwinding of duplex DNA by translocating in the 3'-5' direction.. The catalysed reaction is ATP + H2O = ADP + phosphate + H(+). Its function is as follows. The heterodimer acts as both an ATP-dependent DNA helicase and an ATP-dependent, dual-direction single-stranded exonuclease. Recognizes the chi site generating a DNA molecule suitable for the initiation of homologous recombination. The AddA nuclease domain is required for chi fragment generation; this subunit has the helicase and 3' -&gt; 5' nuclease activities. The polypeptide is ATP-dependent helicase/nuclease subunit A (Staphylococcus aureus (strain MRSA252)).